We begin with the raw amino-acid sequence, 205 residues long: MQGFVLLISGPSGAGKSTLLKKLFDEFEDELYFSISSTTRKPREGEKNGIHYHFISHEEFQKGIDSDHFLEWARVHENFYGTSLKHTQNALDNGKIVVFDIDVQGFKIARKKMADKIVSVFITTKNKDELKKRLIKRNTDTIIQLEKRLQNASDEMKELSEYDYLIINDELKQSYEALRAILIAHKFRTKGQNLGQIQNIWNEGE.

Residues 3–183 (GFVLLISGPS…SYEALRAILI (181 aa)) enclose the Guanylate kinase-like domain. 10-17 (GPSGAGKS) contacts ATP.

Belongs to the guanylate kinase family.

Its subcellular location is the cytoplasm. It carries out the reaction GMP + ATP = GDP + ADP. Its function is as follows. Essential for recycling GMP and indirectly, cGMP. The chain is Guanylate kinase from Campylobacter jejuni (strain RM1221).